A 126-amino-acid chain; its full sequence is Large ribosomal subunit protein bL20 (126 aa).

This sequence belongs to the bacterial ribosomal protein bL20 family.

Functionally, binds directly to 23S ribosomal RNA and is necessary for the in vitro assembly process of the 50S ribosomal subunit. It is not involved in the protein synthesizing functions of that subunit. This Nocardia farcinica (strain IFM 10152) protein is Large ribosomal subunit protein bL20.